The primary structure comprises 521 residues: Membrane-bound transcription factor site-2 protease (521 aa).

Residues 1–3 (MIP) lie on the Cytoplasmic side of the membrane. A helical transmembrane segment spans residues 4–24 (VSLVVVVVGGWTVVYLTDLVL). The Lumenal segment spans residues 25–74 (KSSVYFKHSYEDWLESNGLSISPFHIRWQTAVFNRAFYSWGRRKARMLYQ). 2 consecutive transmembrane segments (helical) span residues 75-95 (WFNFGMVFGVIAMFSSFFLLG) and 96-107 (KTLMQTLAQMMA). At 108-146 (DSPSSYSSSSSSSSSSSSSSSSSSSSSSSSSLHNEQVLQ) the chain is on the lumenal side. The segment at 113–137 (YSSSSSSSSSSSSSSSSSSSSSSSS) is disordered. The chain crosses the membrane as a helical span at residues 147–171 (VVVPGINLPVNQLTYFFAAVLISGV). His173 is a binding site for Zn(2+). The active site involves Glu174. 3 helical membrane-spanning segments follow: residues 176–188 (GHGIAAIREQVRF), 189–211 (NGFGIFLFIIYPGAFVDLFTTHL), and 231–253 (FVLALLGILALVLLPVILLPFYY). Zn(2+) is bound at residue His177. Over 254-448 (TGVGVLITEV…LPVVVETFVK (195 aa)) the chain is Lumenal. Asn339 is a glycosylation site (N-linked (GlcNAc...) asparagine). Transmembrane regions (helical) follow at residues 449 to 466 (YLISLSGALAIVNAVPCF) and 467 to 478 (ALDGQWILNSFL). Over 479 to 494 (DATLTSVIGDNDVKDL) the chain is Lumenal. A helical membrane pass occupies residues 495 to 515 (IGFFILLGGSVLLAANVTLGL). The Cytoplasmic portion of the chain corresponds to 516 to 521 (WMVTAR).

Belongs to the peptidase M50A family. The cofactor is Zn(2+).

It localises to the membrane. The protein resides in the cytoplasm. Its subcellular location is the golgi apparatus membrane. It carries out the reaction Cleaves several transcription factors that are type-2 transmembrane proteins within membrane-spanning domains. Known substrates include sterol regulatory element-binding protein (SREBP) -1, SREBP-2 and forms of the transcriptional activator ATF6. SREBP-2 is cleaved at the site 477-DRSRILL-|-CVLTFLCLSFNPLTSLLQWGGA-505. The residues Asn-Pro, 11 residues distal to the site of cleavage in the membrane-spanning domain, are important for cleavage by S2P endopeptidase. Replacement of either of these residues does not prevent cleavage, but there is no cleavage if both of these residues are replaced.. Functionally, zinc metalloprotease that mediates intramembrane proteolysis of proteins such as ATF6, ATF6B, SREBF1/SREBP1 and SREBF2/SREBP2. Catalyzes the second step in the proteolytic activation of the sterol regulatory element-binding proteins (SREBPs) SREBF1/SREBP1 and SREBF2/SREBP2: cleaves SREBPs within the first transmembrane segment, thereby releasing the N-terminal segment with a portion of the transmembrane segment attached. Mature N-terminal SREBP fragments shuttle to the nucleus and activate gene transcription. Also mediates the second step in the proteolytic activation of the cyclic AMP-dependent transcription factor ATF-6 (ATF6 and ATF6B). Involved in intramembrane proteolysis during bone formation. In astrocytes and osteoblasts, upon DNA damage and ER stress, mediates the second step of the regulated intramembrane proteolytic activation of the transcription factor CREB3L1, leading to the inhibition of cell-cycle progression. The sequence is that of Membrane-bound transcription factor site-2 protease (MBTPS2) from Pongo abelii (Sumatran orangutan).